The sequence spans 447 residues: Rab GDP dissociation inhibitor alpha (447 aa).

A Phosphoserine modification is found at serine 427.

Belongs to the Rab GDI family. As to quaternary structure, interacts with RHOH. Interacts with the non-phosphorylated forms of RAB1A, RAB3A, RAB5A, RAB5B, RAB5C, RAB8A, RAB8B, RAB10, RAB12, RAB35, and RAB43. Interacts with RAB3A.

It is found in the cytoplasm. The protein localises to the golgi apparatus. It localises to the trans-Golgi network. Functionally, regulates the GDP/GTP exchange reaction of most Rab proteins by inhibiting the dissociation of GDP from them, and the subsequent binding of GTP to them. Promotes the dissociation of GDP-bound Rab proteins from the membrane and inhibits their activation. Promotes the dissociation of RAB1A, RAB3A, RAB5A and RAB10 from membranes. This is Rab GDP dissociation inhibitor alpha (GDI1) from Bos taurus (Bovine).